A 278-amino-acid polypeptide reads, in one-letter code: MKFRAKITGKGCLELFIHVSGTVARLAKVCVLRVRPDSLCFGPAGSGGLHEARLWCEVRQGAFQQFRMEGVSEDLDEIHLELTAEHLSRAARSAAGASSLKLQLTHKRRPSLTVAVELVSSLGRARSVVHDLPVRVLPRRVWRDCLPPSLRASDASIRLPRWRTLRSIVERMANVGSHVLVEANLSGRMTLSIETEVVSIQSYFKNLGNPPQSAVGVPENRDLESMVQVRVDNRKLLQFLEGQQIHPTTALCNIWDNTLLQLVLVQEDVSLQYFIPAL.

The protein belongs to the HUS1 family. As to quaternary structure, interacts with RAD1 and RAD9B. As to expression, expressed strongly in testis, less in spleen, thymus, prostate, colon and leukocytes.

The sequence is that of Checkpoint protein HUS1B (HUS1B) from Homo sapiens (Human).